We begin with the raw amino-acid sequence, 269 residues long: Ribonuclease HII (269 aa).

The region spanning 83-269 (YLIAGVDEVG…HRMSFLTNIL (187 aa)) is the RNase H type-2 domain. A divalent metal cation contacts are provided by D89, E90, and D185.

This sequence belongs to the RNase HII family. It depends on Mn(2+) as a cofactor. Mg(2+) is required as a cofactor.

The protein resides in the cytoplasm. It carries out the reaction Endonucleolytic cleavage to 5'-phosphomonoester.. Endonuclease that specifically degrades the RNA of RNA-DNA hybrids. The chain is Ribonuclease HII from Clostridium botulinum (strain ATCC 19397 / Type A).